We begin with the raw amino-acid sequence, 247 residues long: MAGHSKWANIKFRKGVQDAKRGKIFTKLIREITVAARMGGGDESSNPRLRDAVKKALNANMKRDTIDNAVKRGVGGADGEAMIAMRYEGYGPGGVAILVDCLSDNKNRTVSEVRHAFSKHGGNLGTDGSVSYLFTNQGEILMASNQPEDKVMEIAIDAGASDVAVEDSQIEIITPVEAYHTVLNALQDAALEVEQSHLTMRAQTLVPISDETAESLIKLIDMLEDLDDVQEVYSNAEFSEKILESMN.

This sequence belongs to the TACO1 family.

It is found in the cytoplasm. The chain is Probable transcriptional regulatory protein lpl1249 from Legionella pneumophila (strain Lens).